The chain runs to 742 residues: Clamp-binding protein CrfC (742 aa).

Residues 41–45 (QLALP) form a clamp-binding consensus region. Residues 66-402 (SRLEMVLAIV…LWEDSLFAQP (337 aa)) form the Dynamin-type G domain. Residues 76 to 83 (GTMKAGKS) form a G1 motif region. Residues 102 to 104 (MTA) are G2 motif. The interval 236–239 (DTPG) is G3 motif. The tract at residues 297-300 (NKFD) is G4 motif. Residues 331-334 (FPVS) are G5 motif. Residues 440-472 (RAHGLNVACEQLRQNIHQVEESLQLLQLNQAQV) adopt a coiled-coil conformation.

This sequence belongs to the TRAFAC class dynamin-like GTPase superfamily. Dynamin/Fzo/YdjA family. Forms homooligomers. Binds to the beta sliding clamp processivity factor (DnaN) in the presence and absence of DNA, may bind to the clamp itself as homodimers or trimers. Homooligomers may be able to bind more than 1 clamp complex.

It is found in the cytoplasm. Its function is as follows. Important for the colocalization of sister nascent DNA strands after replication fork passage during DNA replication, and for positioning and subsequent partitioning of sister chromosomes. Does not have GTPase activity on its own. The polypeptide is Clamp-binding protein CrfC (crfC) (Escherichia coli).